The primary structure comprises 335 residues: Putative D-threonate 4-phosphate dehydrogenase (335 aa).

Histidine 140 and threonine 141 together coordinate substrate. Residues histidine 170, histidine 214, and histidine 269 each coordinate a divalent metal cation. Substrate contacts are provided by lysine 277 and arginine 295.

The protein belongs to the PdxA family. PdxA2 subfamily. As to quaternary structure, homodimer. The cofactor is a divalent metal cation.

The enzyme catalyses 4-O-phospho-D-threonate + NAD(+) = dihydroxyacetone phosphate + CO2 + NADH. Catalyzes the NAD-dependent oxidation and subsequent decarboxylation of D-threonate 4-phosphate to produce dihydroxyacetone phosphate (DHAP). The polypeptide is Putative D-threonate 4-phosphate dehydrogenase (Symbiobacterium thermophilum (strain DSM 24528 / JCM 14929 / IAM 14863 / T)).